Consider the following 797-residue polypeptide: MGSQQSKLDFRNAVLRLHEERNIPKFDLIWERLWTLPETTEDVFHLMSIDDLTKVKDNAPENLQTIIAVLWDKLEDLQKETLFDDPAAPTTKCALNCMRLLTRLMPIIFEDKSMLEWFDYFAWTVPKDPNINTPRGASFLNTVVDYLFLINFTIPAHNDLTHGVHYCIWETGVVYHPTMLKERSYELHRVEVLRLLLSLFSEEIYRTDGNGSSCCAYVASIANRRLVLCLLSSLINTAMRFNTMFWKPEFLPLDNSVAHMSLIEYCFSVLLILMSEENNNGTPCYNNYRSSKNTLPKNYFSILLSKLQPYSDFQIILDGMSRLLYPPMQSTIPKRSSLIMFDYYPLVLIFCKLFIHYNERFFHYLIDTDRAIDLFIFLLYLSFEYLGDPSTYNHLKLCVILLKRLTAEKYFCKRLNKPFQQQTALPISMPVPFEGGTYADFTIIAISLLVQYTKDYHSEIAQMLCCSLCYLCLYAQNLNSHSSQSLFELFQSASYPGFLISNDVNHKILKYVIGAINNAIQYAQKYNAPLLYFFSMHKDYIEAVSALSFDAIMSVRNSSAEGDSAYWTRNGKTFSSKAFDSILLSRLRYVRSKSPTPYYPIESSEFGFTNLKDVTSKDEITDGFDKALRSNSLRTHRDSRPVQPLLKQRPQLHRALTESATLHGNDRSLEDTDEAKVEPIAHSVDYTFKPTVEWWNKWWPSLNFRTMLDIFTDLSLKISDMKKAGHPASEIMAMIKTQKYPATNQPYIPKYRTKEWRQQLANFARLFAWQVSCDLDSHKREGPGIFEGTDVKIFDSF.

This sequence belongs to the hid-1 family.

The protein localises to the cytoplasm. It localises to the nucleus. The protein is Hid-1 family protein P27G11.12 of Schizosaccharomyces pombe (strain 972 / ATCC 24843) (Fission yeast).